The following is a 569-amino-acid chain: Probable diguanylate cyclase DgcQ (569 aa).

2 helical membrane-spanning segments follow: residues 25–45 (LGPG…STLL) and 365–385 (IALT…WYVI). The GGDEF domain maps to 433–568 (HPFSVIQVDL…GRNRVCASDN (136 aa)). Residue Asp441 coordinates Mg(2+). Substrate is bound by residues Asn449, His454, and Asp458. Glu484 provides a ligand contact to Mg(2+). Catalysis depends on Glu484, which acts as the Proton acceptor.

As to quaternary structure, homodimer. Requires Mg(2+) as cofactor.

It is found in the cell inner membrane. It catalyses the reaction 2 GTP = 3',3'-c-di-GMP + 2 diphosphate. It functions in the pathway glycan metabolism; bacterial cellulose biosynthesis. The protein operates within purine metabolism; 3',5'-cyclic di-GMP biosynthesis. Its function is as follows. Catalyzes the synthesis of cyclic-di-GMP (c-di-GMP) via the condensation of 2 GTP molecules. Cyclic-di-GMP is a second messenger which controls cell surface-associated traits in bacteria. Involved in the regulation of cellulose production. The protein is Probable diguanylate cyclase DgcQ of Shigella sonnei (strain Ss046).